The following is a 425-amino-acid chain: Dihydroorotase (425 aa).

Zn(2+) contacts are provided by H56 and H58. Substrate-binding positions include 58 to 60 and N90; that span reads HYR. D148, H175, and H228 together coordinate Zn(2+). N274 serves as a coordination point for substrate. Zn(2+) is bound at residue D301. Residue D301 is part of the active site. Residues H305 and 319–320 contribute to the substrate site; that span reads FG.

Belongs to the metallo-dependent hydrolases superfamily. DHOase family. Class I DHOase subfamily. It depends on Zn(2+) as a cofactor.

It catalyses the reaction (S)-dihydroorotate + H2O = N-carbamoyl-L-aspartate + H(+). The protein operates within pyrimidine metabolism; UMP biosynthesis via de novo pathway; (S)-dihydroorotate from bicarbonate: step 3/3. Functionally, catalyzes the reversible cyclization of carbamoyl aspartate to dihydroorotate. In Lactobacillus gasseri (strain ATCC 33323 / DSM 20243 / BCRC 14619 / CIP 102991 / JCM 1131 / KCTC 3163 / NCIMB 11718 / NCTC 13722 / AM63), this protein is Dihydroorotase.